A 488-amino-acid polypeptide reads, in one-letter code: Ribulose bisphosphate carboxylase large chain (488 aa).

Positions 127 and 177 each coordinate substrate. Residue Lys-179 is the Proton acceptor of the active site. Lys-181 lines the substrate pocket. 3 residues coordinate Mg(2+): Lys-205, Asp-207, and Glu-208. The residue at position 205 (Lys-205) is an N6-carboxylysine. The Proton acceptor role is filled by His-297. Substrate contacts are provided by Arg-298, His-330, and Ser-382.

The protein belongs to the RuBisCO large chain family. Type I subfamily. In terms of assembly, heterohexadecamer of 8 large chains and 8 small chains. The cofactor is Mg(2+).

It localises to the plastid. The protein resides in the chloroplast. The enzyme catalyses 2 (2R)-3-phosphoglycerate + 2 H(+) = D-ribulose 1,5-bisphosphate + CO2 + H2O. It catalyses the reaction D-ribulose 1,5-bisphosphate + O2 = 2-phosphoglycolate + (2R)-3-phosphoglycerate + 2 H(+). Functionally, ruBisCO catalyzes two reactions: the carboxylation of D-ribulose 1,5-bisphosphate, the primary event in carbon dioxide fixation, as well as the oxidative fragmentation of the pentose substrate in the photorespiration process. Both reactions occur simultaneously and in competition at the same active site. This is Ribulose bisphosphate carboxylase large chain from Antithamnion sp. (Red alga).